A 209-amino-acid chain; its full sequence is Protease (209 aa).

Active-site residues include His60, Asp77, and Cys127.

Belongs to the peptidase C5 family. As to quaternary structure, interacts with protease cofactor pVI-C; this interaction is necessary for protease activation.

It is found in the virion. It localises to the host nucleus. It carries out the reaction Cleaves proteins of the adenovirus and its host cell at two consensus sites: -Yaa-Xaa-Gly-Gly-|-Xaa- and -Yaa-Xaa-Gly-Xaa-|-Gly- (in which Yaa is Met, Ile or Leu, and Xaa is any amino acid).. Its activity is regulated as follows. Requires DNA and protease cofactor for maximal activation. Inside nascent virions, becomes partially activated by binding to the viral DNA, allowing it to cleave the cofactor that binds to the protease and fully activates it. Actin, like the viral protease cofactor, seems to act as a cofactor in the cleavage of cytokeratin 18 and of actin itself. Cleaves viral precursor proteins (pTP, pIIIa, pVI, pVII, pVIII, and pX) inside newly assembled particles giving rise to mature virions. Protease complexed to its cofactor slides along the viral DNA to specifically locate and cleave the viral precursors. Mature virions have a weakened organization compared to the unmature virions, thereby facilitating subsequent uncoating. Without maturation, the particle lacks infectivity and is unable to uncoat. Late in adenovirus infection, in the cytoplasm, may participate in the cytoskeleton destruction. Cleaves host cell cytoskeletal keratins K7 and K18. In Homo sapiens (Human), this protein is Protease.